Here is a 185-residue protein sequence, read N- to C-terminus: Ribose 1,5-bisphosphate phosphokinase PhnN (185 aa).

Residue 10–17 (GPSGSGKD) coordinates ATP.

This sequence belongs to the ribose 1,5-bisphosphokinase family.

The enzyme catalyses alpha-D-ribose 1,5-bisphosphate + ATP = 5-phospho-alpha-D-ribose 1-diphosphate + ADP. Its pathway is metabolic intermediate biosynthesis; 5-phospho-alpha-D-ribose 1-diphosphate biosynthesis; 5-phospho-alpha-D-ribose 1-diphosphate from D-ribose 5-phosphate (route II): step 3/3. Its function is as follows. Catalyzes the phosphorylation of ribose 1,5-bisphosphate to 5-phospho-D-ribosyl alpha-1-diphosphate (PRPP). Accepts ATP but not GTP as a phosphoryl donor, and uses ribose 1,5-bisphosphate but not ribose, ribose 1-phosphate, or ribose 5-phosphate as a phosphoryl acceptor. This chain is Ribose 1,5-bisphosphate phosphokinase PhnN (phnN), found in Escherichia coli (strain K12).